The chain runs to 262 residues: Lysine 5,6-aminomutase beta subunit (262 aa).

In terms of domain architecture, B12-binding spans 120–262; that stretch reads KIVVVGASTG…VKTLNDRMNS (143 aa). Adenosylcob(III)alamin is bound by residues 130–136 and histidine 133; that span reads TDAHTVG. The residue at position 144 (lysine 144) is an N6-(pyridoxal phosphate)lysine. Adenosylcob(III)alamin-binding positions include 185 to 192, 219 to 223, and 239 to 244; these read LVSQTVTQ, LCGGP, and FGPGRF.

Belongs to the KamE family. In terms of assembly, heterotetramer of 2 alpha and 2 beta subunits. Adenosylcob(III)alamin serves as cofactor. Requires pyridoxal 5'-phosphate as cofactor.

It catalyses the reaction (3S)-3,6-diaminohexanoate = (3S,5S)-3,5-diaminohexanoate. The enzyme catalyses D-lysine = (2R,5S)-2,5-diaminohexanoate. It participates in amino-acid metabolism; lysine degradation. Rapidly inactivated in the presence of D-lysine and to a lesser extent in the absence of adenosylcobalamin (Adocbl). Activity is stable in the presence of Adocbl when D-lysine is absent. Adocbl imparts thermal stability at 37 degrees Celsius. Its function is as follows. Catalyzes the migration of the L-beta-lysine and D-lysine epsilon amino group to the delta carbon to produce 3,5-diaminohexanoate and 2,5-diaminohexanoate, respectively. The protein is Lysine 5,6-aminomutase beta subunit (kamE) of Acetoanaerobium sticklandii (strain ATCC 12662 / DSM 519 / JCM 1433 / CCUG 9281 / NCIMB 10654 / HF) (Clostridium sticklandii).